A 402-amino-acid polypeptide reads, in one-letter code: Phosphoglycerate kinase (402 aa).

Substrate contacts are provided by residues 24-26 (DFN), R40, 63-66 (HFGR), R122, and R155. Residues K206, G297, E328, and 357-360 (GGDS) each bind ATP.

It belongs to the phosphoglycerate kinase family. In terms of assembly, monomer.

The protein localises to the cytoplasm. It catalyses the reaction (2R)-3-phosphoglycerate + ATP = (2R)-3-phospho-glyceroyl phosphate + ADP. It functions in the pathway carbohydrate degradation; glycolysis; pyruvate from D-glyceraldehyde 3-phosphate: step 2/5. The protein is Phosphoglycerate kinase of Synechococcus sp. (strain ATCC 27144 / PCC 6301 / SAUG 1402/1) (Anacystis nidulans).